We begin with the raw amino-acid sequence, 327 residues long: Undecaprenyl-phosphate 4-deoxy-4-formamido-L-arabinose transferase (327 aa).

2 consecutive transmembrane segments (helical) span residues 236–256 (LSIF…LLVV) and 270–290 (VFML…GMGL).

This sequence belongs to the glycosyltransferase 2 family.

Its subcellular location is the cell inner membrane. The catalysed reaction is UDP-4-deoxy-4-formamido-beta-L-arabinose + di-trans,octa-cis-undecaprenyl phosphate = 4-deoxy-4-formamido-alpha-L-arabinopyranosyl di-trans,octa-cis-undecaprenyl phosphate + UDP. It functions in the pathway glycolipid biosynthesis; 4-amino-4-deoxy-alpha-L-arabinose undecaprenyl phosphate biosynthesis; 4-amino-4-deoxy-alpha-L-arabinose undecaprenyl phosphate from UDP-4-deoxy-4-formamido-beta-L-arabinose and undecaprenyl phosphate: step 1/2. It participates in bacterial outer membrane biogenesis; lipopolysaccharide biosynthesis. Functionally, catalyzes the transfer of 4-deoxy-4-formamido-L-arabinose from UDP to undecaprenyl phosphate. The modified arabinose is attached to lipid A and is required for resistance to polymyxin and cationic antimicrobial peptides. The chain is Undecaprenyl-phosphate 4-deoxy-4-formamido-L-arabinose transferase from Klebsiella pneumoniae subsp. pneumoniae (strain ATCC 700721 / MGH 78578).